Reading from the N-terminus, the 240-residue chain is MKILLIGYGAMNQRVARLAEEKGHEIVGVIENTPKATTPYQQYQHIADVKDADVAIDFSNPNLLFPLLDEEFHLPLVVATTGEKEKLLNKLDELSQNIPVFFSANMSYGVHALTKILAAAVPLLDEFDIELTEAHHNKKVDAPSGTLEKLYDVIVSLKENVTPVYDRHELNEKRQPQDIGIHSIRGGTIVGEHEVLFAGTDETIQITHRAQSKDIFANGAIQAAERLVNKPNGFYTFDNL.

Residues 79-81 (ATT) and 103-106 (SANM) contribute to the NAD(+) site. Residue H135 is the Proton donor/acceptor of the active site. H136 is a (S)-2,3,4,5-tetrahydrodipicolinate binding site. The active-site Proton donor is K139. 145–146 (GT) serves as a coordination point for (S)-2,3,4,5-tetrahydrodipicolinate.

It belongs to the DapB family.

The protein localises to the cytoplasm. It catalyses the reaction (S)-2,3,4,5-tetrahydrodipicolinate + NAD(+) + H2O = (2S,4S)-4-hydroxy-2,3,4,5-tetrahydrodipicolinate + NADH + H(+). It carries out the reaction (S)-2,3,4,5-tetrahydrodipicolinate + NADP(+) + H2O = (2S,4S)-4-hydroxy-2,3,4,5-tetrahydrodipicolinate + NADPH + H(+). The protein operates within amino-acid biosynthesis; L-lysine biosynthesis via DAP pathway; (S)-tetrahydrodipicolinate from L-aspartate: step 4/4. In terms of biological role, catalyzes the conversion of 4-hydroxy-tetrahydrodipicolinate (HTPA) to tetrahydrodipicolinate. The sequence is that of 4-hydroxy-tetrahydrodipicolinate reductase from Staphylococcus aureus (strain MSSA476).